A 556-amino-acid polypeptide reads, in one-letter code: Secreted lipase 4 (556 aa).

The signal sequence occupies residues 1–21 (MKLLTNIGTLLALSPVQQVSA). N-linked (GlcNAc...) asparagine glycans are attached at residues asparagine 46, asparagine 263, asparagine 305, asparagine 411, and asparagine 453.

This sequence belongs to the type-B carboxylesterase/lipase family.

Its subcellular location is the secreted. It catalyses the reaction a carboxylic ester + H2O = an alcohol + a carboxylate + H(+). Functionally, secreted lipase involved in plant virulence. Has a substrate preference for p-nitrophenyl esters with a carbon chain length of C12 (p-nitrophenyl laureate). This is Secreted lipase 4 from Gibberella zeae (strain ATCC MYA-4620 / CBS 123657 / FGSC 9075 / NRRL 31084 / PH-1) (Wheat head blight fungus).